We begin with the raw amino-acid sequence, 114 residues long: Probable 4-amino-4-deoxy-L-arabinose-phosphoundecaprenol flippase subunit ArnE (114 aa).

The next 3 membrane-spanning stretches (helical) occupy residues 38–58, 64–84, and 94–114; these read LTLRWLAIAVVSLGLGMLLWL, LPLSVAYPMLSFNFVLVTLAA, and LRHWLGVAAIIFGILLMSWHL. One can recognise an EamA domain in the interval 43–112; it reads LAIAVVSLGL…IIFGILLMSW (70 aa).

This sequence belongs to the ArnE family. Heterodimer of ArnE and ArnF.

The protein resides in the cell inner membrane. It participates in bacterial outer membrane biogenesis; lipopolysaccharide biosynthesis. Functionally, translocates 4-amino-4-deoxy-L-arabinose-phosphoundecaprenol (alpha-L-Ara4N-phosphoundecaprenol) from the cytoplasmic to the periplasmic side of the inner membrane. In Yersinia pseudotuberculosis serotype O:1b (strain IP 31758), this protein is Probable 4-amino-4-deoxy-L-arabinose-phosphoundecaprenol flippase subunit ArnE.